The chain runs to 855 residues: Leucine--tRNA ligase (855 aa).

The 'HIGH' region motif lies at 42-52 (PYPSGSLHVGH). A disordered region spans residues 292–311 (SEMDRTAEDKPKKGIPTGGK). The span at 293-303 (EMDRTAEDKPK) shows a compositional bias: basic and acidic residues. The short motif at 614–618 (KMSKS) is the 'KMSKS' region element. Lysine 617 provides a ligand contact to ATP.

This sequence belongs to the class-I aminoacyl-tRNA synthetase family.

The protein localises to the cytoplasm. The catalysed reaction is tRNA(Leu) + L-leucine + ATP = L-leucyl-tRNA(Leu) + AMP + diphosphate. The sequence is that of Leucine--tRNA ligase from Acaryochloris marina (strain MBIC 11017).